Here is a 139-residue protein sequence, read N- to C-terminus: Small integral membrane protein 34 (139 aa).

The helical transmembrane segment at 46–66 (GTSAAWYILTIIGIYAVIFVF) threads the bilayer.

The protein localises to the membrane. This is Small integral membrane protein 34 from Homo sapiens (Human).